Consider the following 337-residue polypeptide: Ferredoxin--NADP reductase (337 aa).

FAD contacts are provided by Asp35, Gln43, Tyr48, Ala88, Phe122, Asp289, and Thr330.

The protein belongs to the ferredoxin--NADP reductase type 2 family. Homodimer. FAD is required as a cofactor.

The enzyme catalyses 2 reduced [2Fe-2S]-[ferredoxin] + NADP(+) + H(+) = 2 oxidized [2Fe-2S]-[ferredoxin] + NADPH. In Ehrlichia ruminantium (strain Welgevonden), this protein is Ferredoxin--NADP reductase.